The following is a 318-amino-acid chain: Lipoyl synthase (318 aa).

[4Fe-4S] cluster contacts are provided by C64, C69, C75, C90, C94, C97, and S304. The Radical SAM core domain occupies 76–293; it reads FSGGTATFMI…AEEGYKMGFK (218 aa).

This sequence belongs to the radical SAM superfamily. Lipoyl synthase family. [4Fe-4S] cluster serves as cofactor.

It localises to the cytoplasm. The catalysed reaction is [[Fe-S] cluster scaffold protein carrying a second [4Fe-4S](2+) cluster] + N(6)-octanoyl-L-lysyl-[protein] + 2 oxidized [2Fe-2S]-[ferredoxin] + 2 S-adenosyl-L-methionine + 4 H(+) = [[Fe-S] cluster scaffold protein] + N(6)-[(R)-dihydrolipoyl]-L-lysyl-[protein] + 4 Fe(3+) + 2 hydrogen sulfide + 2 5'-deoxyadenosine + 2 L-methionine + 2 reduced [2Fe-2S]-[ferredoxin]. It participates in protein modification; protein lipoylation via endogenous pathway; protein N(6)-(lipoyl)lysine from octanoyl-[acyl-carrier-protein]: step 2/2. Catalyzes the radical-mediated insertion of two sulfur atoms into the C-6 and C-8 positions of the octanoyl moiety bound to the lipoyl domains of lipoate-dependent enzymes, thereby converting the octanoylated domains into lipoylated derivatives. The chain is Lipoyl synthase from Pseudomonas syringae pv. tomato (strain ATCC BAA-871 / DC3000).